The sequence spans 70 residues: Large ribosomal subunit protein eL38 (70 aa).

This sequence belongs to the eukaryotic ribosomal protein eL38 family.

The protein is Large ribosomal subunit protein eL38 (rpl-38) of Ostertagia ostertagi (Brown stomach worm).